The sequence spans 30 residues: Phospholemman-like protein (30 aa).

The protein belongs to the FXYD family. In terms of processing, phosphorylated by protein kinase a (PK-A) and protein kinase C (PK-C). Phosphorylated in response to insulin and adrenergic stimulation.

It localises to the microsome membrane. The protein localises to the endoplasmic reticulum membrane. In terms of biological role, induces a hyperpolarization-activated chloride current when expressed in Xenopus oocytes. May have a functional role in muscle contraction. This is Phospholemman-like protein from Squalus acanthias (Spiny dogfish).